Consider the following 178-residue polypeptide: Thymidine kinase (178 aa).

13–20 is a binding site for ATP; sequence GPMFAGKS. Glutamate 85 (proton acceptor) is an active-site residue. Residue phenylalanine 115 coordinates substrate. Residues cysteine 140 and cysteine 143 each contribute to the Zn(2+) site. Substrate is bound at residue 159-163; it reads IEIIG. Cysteine 172 and cysteine 175 together coordinate Zn(2+).

Belongs to the thymidine kinase family.

The catalysed reaction is thymidine + ATP = dTMP + ADP + H(+). The protein is Thymidine kinase (TK) of Myxoma virus (strain Lausanne) (MYXV).